A 136-amino-acid chain; its full sequence is Histone H3 (136 aa).

The disordered stretch occupies residues 1 to 43 (MARTKQTARKSTGGKAPRKQLATKAARKSAPATGGVKKPHRYR). At Lys5 the chain carries N6-methylated lysine. Lys10 bears the N6-acetyllysine; alternate mark. Position 10 is an N6-methylated lysine; alternate (Lys10). Ser11 is modified (phosphoserine). 2 positions are modified to N6-acetyllysine: Lys15 and Lys24. N6-methylated lysine occurs at positions 28, 37, and 80.

This sequence belongs to the histone H3 family. In terms of assembly, the nucleosome is a histone octamer containing two molecules each of H2A, H2B, H3 and H4 assembled in one H3-H4 heterotetramer and two H2A-H2B heterodimers. The octamer wraps approximately 147 bp of DNA. Post-translationally, acetylation is generally linked to gene activation. Methylation at Lys-5 is linked to gene activation. Methylation at Lys-10 is linked to gene repression.

The protein resides in the nucleus. It is found in the chromosome. Core component of nucleosome. Nucleosomes wrap and compact DNA into chromatin, limiting DNA accessibility to the cellular machineries which require DNA as a template. Histones thereby play a central role in transcription regulation, DNA repair, DNA replication and chromosomal stability. DNA accessibility is regulated via a complex set of post-translational modifications of histones, also called histone code, and nucleosome remodeling. This is Histone H3 from Platynereis dumerilii (Dumeril's clam worm).